Reading from the N-terminus, the 661-residue chain is DNA cross-link repair protein PSO2/SNM1 (661 aa).

The tract at residues 1–44 (MSRKSIVQIRRSEVKRKRSSTASSTSEGKTLHKNTHTSSKRQRT) is disordered. Basic residues predominate over residues 31-43 (LHKNTHTSSKRQR). A UBZ4-type zinc finger spans residues 144-174 (VIQCPICLENLSHLELYERETHCDTCIGSDP). 4 residues coordinate Zn(2+): cysteine 147, cysteine 150, histidine 165, and cysteine 169.

This sequence belongs to the DNA repair metallo-beta-lactamase (DRMBL) family.

The protein resides in the nucleus. Functionally, required for DNA interstrand cross-link repair. This requires cleavage of cross-linked DNA to generate DNA double strand breaks (DSBs). This protein has 5' exonuclease activity on single-stranded and double-stranded DNA, which appears to be necessary for the processing of DNA double strand breaks prior to ligation. The protein is DNA cross-link repair protein PSO2/SNM1 (PSO2) of Saccharomyces cerevisiae (strain ATCC 204508 / S288c) (Baker's yeast).